A 79-amino-acid chain; its full sequence is Acyl carrier protein (79 aa).

A Carrier domain is found at 2-77 (ESIEQRVKKI…QAIDYINSHG (76 aa)). Ser37 is modified (O-(pantetheine 4'-phosphoryl)serine).

Belongs to the acyl carrier protein (ACP) family. In terms of processing, 4'-phosphopantetheine is transferred from CoA to a specific serine of apo-ACP by AcpS. This modification is essential for activity because fatty acids are bound in thioester linkage to the sulfhydryl of the prosthetic group.

The protein resides in the cytoplasm. It functions in the pathway lipid metabolism; fatty acid biosynthesis. In terms of biological role, carrier of the growing fatty acid chain in fatty acid biosynthesis. The protein is Acyl carrier protein of Bordetella avium (strain 197N).